Here is a 75-residue protein sequence, read N- to C-terminus: MAGQEDPVQREIHQDWANREYIEVITSSIKKIADFLNSFDMSCRSRLATLNEKLTALERRIEYIEARVTKGETLT.

Positions 41–72 form a coiled coil; it reads MSCRSRLATLNEKLTALERRIEYIEARVTKGE.

It belongs to the BRK1 family.

It localises to the cytoplasm. Its subcellular location is the cytoskeleton. In terms of biological role, involved in regulation of actin and microtubule organization. Part of a WAVE complex that activates the Arp2/3 complex. This is Probable protein BRICK1 (brk1) from Danio rerio (Zebrafish).